A 513-amino-acid chain; its full sequence is Cytochrome P450 monooxygenase ARMGADRAFT_1018418 (513 aa).

The chain crosses the membrane as a helical span at residues 1–21 (MTHASSAWFLAAVVIVTFIVV). C435 serves as a coordination point for heme. A glycan (N-linked (GlcNAc...) asparagine) is linked at N442.

It belongs to the cytochrome P450 family. It depends on heme as a cofactor.

Its subcellular location is the membrane. It participates in secondary metabolite biosynthesis. In terms of biological role, cytochrome P450 monooxygenase, part of the gene cluster that mediates the biosynthesis of melleolides, a range of antifungal and phytotoxic polyketide derivatives composed of an orsellinic acid (OA) moiety esterified to various sesquiterpene alcohols. The first step in melleolides biosynthesis is performed by the delta(6)-protoilludene synthase PRO1 which catalyzes the cyclization of farnesyl diphosphate to protoilludene. The orsellinic acid synthase armB produces OA by condensing acetyl-CoA with 3 malonyl-CoA units in a three-round chain elongation reaction folowed by a C2-C7 ring closure. ArmB further catalyzes the trans-esterification of OA to the various sesquiterpene alcohols resulting from the hydroxylation of protoilludene. The melleolides cluster also includes 5 cytochrome P450 monooxygenases, 4 NAD(+)-dependent oxidoreductases, one flavin-dependent oxidoreductase, and one O-methyltransferase. The cytochrome P450 monooxygenases may be involved in protoilludene hydroxylation to elaborate melleolides with multiple alcohol groups, such as melleolide D, which carries alcohol functionalities at C-4, C-5, C-10, and C-13. The role of the NAD(+)-dependent enzymes remains unknown. Numerous melleolides, including arnamial, show 5'-O-methylation of the aromatic moiety which may be catalyzed by the methyltransferase encoded in the cluster. The flavin-dependent oxidoreductase might represent the dehydrogenase yielding the aldehyde in position 1 of arnamial and other melleolides. Finally, several halogenase localized outside of the cluster, are able to catalyze the transfer of a single chlorine atom to the melleolide backbone, resulting in a 6'-chloromelleolide product. The protein is Cytochrome P450 monooxygenase ARMGADRAFT_1018418 of Armillaria gallica (Bulbous honey fungus).